The following is a 197-amino-acid chain: Proteasome subunit beta 1 (197 aa).

Positions 1–6 are cleaved as a propeptide — removed in mature form; by autocatalysis; the sequence is MNRKTG. Catalysis depends on Thr-7, which acts as the Nucleophile.

The protein belongs to the peptidase T1B family. The 20S proteasome core is composed of 14 alpha and 14 beta subunits that assemble into four stacked heptameric rings, resulting in a barrel-shaped structure. The two inner rings, each composed of seven catalytic beta subunits, are sandwiched by two outer rings, each composed of seven alpha subunits. The catalytic chamber with the active sites is on the inside of the barrel. Has a gated structure, the ends of the cylinder being occluded by the N-termini of the alpha-subunits. Is capped at one or both ends by the proteasome regulatory ATPase, PAN.

The protein localises to the cytoplasm. The enzyme catalyses Cleavage of peptide bonds with very broad specificity.. Its activity is regulated as follows. The formation of the proteasomal ATPase PAN-20S proteasome complex, via the docking of the C-termini of PAN into the intersubunit pockets in the alpha-rings, triggers opening of the gate for substrate entry. Interconversion between the open-gate and close-gate conformations leads to a dynamic regulation of the 20S proteasome proteolysis activity. Component of the proteasome core, a large protease complex with broad specificity involved in protein degradation. In Pyrococcus horikoshii (strain ATCC 700860 / DSM 12428 / JCM 9974 / NBRC 100139 / OT-3), this protein is Proteasome subunit beta 1.